A 189-amino-acid polypeptide reads, in one-letter code: Elongation factor P (189 aa).

Belongs to the elongation factor P family.

It localises to the cytoplasm. It functions in the pathway protein biosynthesis; polypeptide chain elongation. Involved in peptide bond synthesis. Stimulates efficient translation and peptide-bond synthesis on native or reconstituted 70S ribosomes in vitro. Probably functions indirectly by altering the affinity of the ribosome for aminoacyl-tRNA, thus increasing their reactivity as acceptors for peptidyl transferase. In Sinorhizobium medicae (strain WSM419) (Ensifer medicae), this protein is Elongation factor P.